We begin with the raw amino-acid sequence, 910 residues long: Putative disease resistance protein At1g58400 (910 aa).

Residues 15 to 57 (DRLTQEYEQFQGVEDRIAELKSNLNLLKSFLKDAEAKKNTSQM) adopt a coiled-coil conformation. One can recognise an NB-ARC domain in the interval 148-460 (REREMRQTFS…AEGILEPRHY (313 aa)). 191-198 (GMGGLGKT) lines the ATP pocket. LRR repeat units follow at residues 580–604 (LELLRVLDLYKAKFEGRNLPSGIGK) and 605–628 (LIHLRYLNLDLARVSRLPSSLGNL).

This sequence belongs to the disease resistance NB-LRR family.

In terms of biological role, potential disease resistance protein. This chain is Putative disease resistance protein At1g58400, found in Arabidopsis thaliana (Mouse-ear cress).